The following is a 539-amino-acid chain: Membrane protein insertase YidC (539 aa).

A helical membrane pass occupies residues 6–26 (NILLIALALVSFLLFQQWNVA). The segment covering 35 to 44 (EQAQSGSTLP) has biased composition (polar residues). Positions 35–55 (EQAQSGSTLPAPSYADDLDPA) are disordered. 4 consecutive transmembrane segments (helical) span residues 341 to 361 (SFIQGIVVNWGLAIICLTFIV), 416 to 436 (LGGCLPILLQMPIFISLYWAL), 454 to 474 (LSAQDPYYILPLLMGASMFLI), and 495 to 515 (PVMFTFFFLFFPSGLVLYWLV).

It belongs to the OXA1/ALB3/YidC family. Type 1 subfamily. As to quaternary structure, interacts with the Sec translocase complex via SecD. Specifically interacts with transmembrane segments of nascent integral membrane proteins during membrane integration.

Its subcellular location is the cell inner membrane. Required for the insertion and/or proper folding and/or complex formation of integral membrane proteins into the membrane. Involved in integration of membrane proteins that insert both dependently and independently of the Sec translocase complex, as well as at least some lipoproteins. Aids folding of multispanning membrane proteins. The sequence is that of Membrane protein insertase YidC from Vibrio atlanticus (strain LGP32) (Vibrio splendidus (strain Mel32)).